The chain runs to 285 residues: MASLREIQMRITSTQSTKQITKAMNMVSASKLNRAQGNNANFKPYMDKLQEVISSIAGGTSGATHPMLQVRPVKRTGYIVITSDRGLAGGYNASVLRDVYRELKDKHTSTDEYRLYVIGKVGVQFFKSRNIPVYSAMTGLNDQPTFVEVAEIVKQTVGAFSEGEIDELKLCYNSFISVISQEVKIQQLLPLGDIEQSASNVMYEYEPEEETILAALLPRYAEGLIYGALLDAKVSEHAARMTAMSSATDNADELIRGLKLKFNRARQAAITQEITEIVGGASALE.

This sequence belongs to the ATPase gamma chain family. As to quaternary structure, F-type ATPases have 2 components, CF(1) - the catalytic core - and CF(0) - the membrane proton channel. CF(1) has five subunits: alpha(3), beta(3), gamma(1), delta(1), epsilon(1). CF(0) has three main subunits: a, b and c.

Its subcellular location is the cell membrane. In terms of biological role, produces ATP from ADP in the presence of a proton gradient across the membrane. The gamma chain is believed to be important in regulating ATPase activity and the flow of protons through the CF(0) complex. In Exiguobacterium sp. (strain ATCC BAA-1283 / AT1b), this protein is ATP synthase gamma chain.